The primary structure comprises 383 residues: ATP phosphoribosyltransferase regulatory subunit (383 aa).

The protein belongs to the class-II aminoacyl-tRNA synthetase family. HisZ subfamily. As to quaternary structure, heteromultimer composed of HisG and HisZ subunits.

It is found in the cytoplasm. It participates in amino-acid biosynthesis; L-histidine biosynthesis; L-histidine from 5-phospho-alpha-D-ribose 1-diphosphate: step 1/9. Required for the first step of histidine biosynthesis. May allow the feedback regulation of ATP phosphoribosyltransferase activity by histidine. This chain is ATP phosphoribosyltransferase regulatory subunit, found in Lactiplantibacillus plantarum (strain ATCC BAA-793 / NCIMB 8826 / WCFS1) (Lactobacillus plantarum).